A 247-amino-acid chain; its full sequence is EGF-like domain-containing protein C02B10.3 (247 aa).

The first 17 residues, 1–17, serve as a signal peptide directing secretion; sequence MTGALCIVLFGVTMVTA. The Extracellular segment spans residues 18-220; it reads ERPKIKDTHG…LCDKRCQKGH (203 aa). EGF-like domains follow at residues 114–150 and 180–213; these read FGTS…RFCE and SGAS…DLCD. Disulfide bonds link cysteine 123/cysteine 138, cysteine 140/cysteine 149, cysteine 190/cysteine 201, and cysteine 203/cysteine 212. A glycan (N-linked (GlcNAc...) asparagine) is linked at asparagine 126. A helical transmembrane segment spans residues 221–240; it reads VTCSTCSSFIPAALFAIILL. At 241–247 the chain is on the cytoplasmic side; it reads CVNKFNY.

The protein resides in the membrane. This is EGF-like domain-containing protein C02B10.3 from Caenorhabditis elegans.